A 678-amino-acid chain; its full sequence is Inositol-trisphosphate 3-kinase C (678 aa).

Disordered stretches follow at residues 26-128 (LEAL…RRNS) and 151-300 (DLQS…LDLS). Residues 44–58 (PGAGGPTGRPEGGGP) show a composition bias toward gly residues. Composition is skewed to basic and acidic residues over residues 61 to 76 (WIEE…RTDL) and 107 to 116 (EKPRQNKELD). Residue Ser-160 is modified to Phosphoserine. 2 stretches are compositionally biased toward basic and acidic residues: residues 173-196 (ELDR…DNLR) and 220-236 (SGKE…HDTD). The short motif at 318–326 (LCPVPRLII) is the Nuclear export signal element. Residues 328–380 (PETPEPEAQPVGPQSRIEGGTGGFSSASSFDESEDDLVAGGGGTSDPEDRAGS) are disordered. Thr-330 carries the phosphothreonine modification. Residue Ser-398 is modified to Phosphoserine. ATP is bound by residues Lys-426, 466-468 (EDL), and Asp-479. Residues Lys-481, 502-508 (RKDMYEK), and 529-536 (KPRYMQWR) contribute to the substrate site. Positions 504–512 (DMYEKMVAV) are calmodulin-binding. 2 residues coordinate ATP: Lys-553 and Asp-633. Lys-636 provides a ligand contact to substrate.

It belongs to the inositol phosphokinase (IPK) family.

Its subcellular location is the nucleus. The protein localises to the cytoplasm. The enzyme catalyses 1D-myo-inositol 1,4,5-trisphosphate + ATP = 1D-myo-inositol 1,3,4,5-tetrakisphosphate + ADP + H(+). Activated by calcium/calmodulin. Inhibited by high concentrations of the substrate Ins(1,2,4)P3, and allosterically activated by the product Ins(1,3,4,5)P4. Functionally, catalyzes the phosphorylation of 1D-myo-inositol 1,4,5-trisphosphate (InsP3) into 1D-myo-inositol 1,3,4,5-tetrakisphosphate and participates to the regulation of calcium homeostasis. Can phosphorylate inositol 2,4,5-triphosphate to inositol 2,4,5,6-tetraphosphate. This is Inositol-trisphosphate 3-kinase C (Itpkc) from Mus musculus (Mouse).